Here is a 420-residue protein sequence, read N- to C-terminus: Arginine biosynthesis bifunctional protein ArgJ (420 aa).

Positions 167, 193, 204, 284, 415, and 420 each coordinate substrate. The active-site Nucleophile is the Thr-204.

Belongs to the ArgJ family. In terms of assembly, heterotetramer of two alpha and two beta chains.

It localises to the cytoplasm. The catalysed reaction is N(2)-acetyl-L-ornithine + L-glutamate = N-acetyl-L-glutamate + L-ornithine. It catalyses the reaction L-glutamate + acetyl-CoA = N-acetyl-L-glutamate + CoA + H(+). Its pathway is amino-acid biosynthesis; L-arginine biosynthesis; L-ornithine and N-acetyl-L-glutamate from L-glutamate and N(2)-acetyl-L-ornithine (cyclic): step 1/1. It participates in amino-acid biosynthesis; L-arginine biosynthesis; N(2)-acetyl-L-ornithine from L-glutamate: step 1/4. Functionally, catalyzes two activities which are involved in the cyclic version of arginine biosynthesis: the synthesis of N-acetylglutamate from glutamate and acetyl-CoA as the acetyl donor, and of ornithine by transacetylation between N(2)-acetylornithine and glutamate. This Prochlorococcus marinus (strain NATL2A) protein is Arginine biosynthesis bifunctional protein ArgJ.